Consider the following 707-residue polypeptide: Zinc finger protein 60 (707 aa).

The KRAB domain occupies 14 to 86 (VTFRDVAVDF…VKKETGRPSQ (73 aa)). C2H2-type zinc fingers lie at residues 173 to 195 (YKCK…ESIH), 201 to 223 (YECK…QKSH), 229 to 251 (FECN…KNIH), 257 to 282 (FECE…RTIH), 288 to 310 (YKCN…QKIH), 316 to 338 (FHCK…ENIH), 344 to 366 (FECK…YDTH), 372 to 394 (FECN…QKTH), 400 to 422 (FKCK…QRIH), 428 to 450 (YQCK…QSIH), 456 to 478 (FECK…QRFH), 484 to 506 (FECK…KTSH), 512 to 534 (FECK…RIIH), 540 to 562 (YKCN…EKIH), 568 to 590 (FECK…QTIH), 596 to 618 (YECE…QRIH), 624 to 646 (FQCK…ERIH), 652 to 674 (FQCK…FRIH), and 680 to 702 (YECS…QSIH).

Belongs to the krueppel C2H2-type zinc-finger protein family. As to expression, expressed widely and evenly in most adult mouse tissues.

The protein resides in the nucleus. May have a role during differentiation processes. This Mus musculus (Mouse) protein is Zinc finger protein 60 (Zfp60).